We begin with the raw amino-acid sequence, 1470 residues long: Calmodulin-regulated spectrin-associated protein 2 (1470 aa).

Residues 222-335 form the Calponin-homology (CH) domain; it reads WKLVPARYRK…FMAELFWWFE (114 aa). The tract at residues 374 to 397 is disordered; that stretch reads SSSSSDFTSRYTRPQTHSSVSGGI. Over residues 380 to 390 the composition is skewed to polar residues; that stretch reads FTSRYTRPQTH. Ser-402 and Ser-404 each carry phosphoserine. Phosphothreonine is present on Thr-412. A phosphoserine mark is found at Ser-450, Ser-581, Ser-582, Ser-594, and Ser-656. Disordered regions lie at residues 580–622 and 648–712; these read QSSP…EDSS and ASNP…EGSE. Thr-661 carries the phosphothreonine modification. Ser-663 bears the Phosphoserine mark. A compositionally biased stretch (low complexity) spans 663 to 682; sequence STKSQPGSSASSSSGVKMTS. Over residues 686 to 696 the composition is skewed to basic and acidic residues; that stretch reads QKFRKLNHTDG. The stretch at 739-776 forms a coiled coil; the sequence is LLASEMVHLRMRLEEKRRAIEAQKKKMEAAFTKQRQKM. Residues 796–835 are compositionally biased toward basic and acidic residues; the sequence is REEAAGAEDEKVYTDRAKEKESQKMDGQRSKSLADIKESM. The tract at residues 796-864 is disordered; that stretch reads REEAAGAEDE…QWNLTSPSEE (69 aa). At Ser-845 the chain carries Phosphoserine. Positions 870–909 form a coiled coil; that stretch reads ELLEYTKSIEKLNSSLHFLQQEMQRLSLQQEMLMQMREQQ. Positions 905–1016 are MBD region; sequence MREQQSWVIS…IQTRSFVCFG (112 aa). Residues Ser-914 and Ser-919 each carry the phosphoserine modification. Disordered stretches follow at residues 930-1059 and 1078-1099; these read RQAG…PLES and NEDQLNQPTDPPPKPVFPPTAP. Residues 935–946 are compositionally biased toward low complexity; the sequence is SSAAAPFSADSP. Positions 952-971 are enriched in polar residues; the sequence is SPQSSTRKSASFSVKNQRTP. 3 positions are modified to phosphothreonine: Thr-979, Thr-984, and Thr-986. A phosphoserine mark is found at Ser-990 and Ser-1001. Positions 1001-1011 are enriched in polar residues; sequence SPSQVPIQTRS. Basic and acidic residues-rich tracts occupy residues 1020-1037 and 1044-1056; these read EPQKEPKPKEEIKKEPSE and SCDHNPGEKEVKP. Residues 1086–1098 are compositionally biased toward pro residues; the sequence is TDPPPKPVFPPTA. Position 1129 is a phosphoserine (Ser-1129). A coiled-coil region spans residues 1147-1219; sequence KDDQKAENDM…REFIRQEYMR (73 aa). Basic and acidic residues predominate over residues 1167–1233; the sequence is RLRREKETQL…KLMEDMDTVI (67 aa). Residues 1167–1327 form a disordered region; it reads RLRREKETQL…TTSSVASGTE (161 aa). Positions 1268–1280 are enriched in polar residues; sequence SSLSLASLNTGDT. Phosphoserine is present on residues Ser-1294, Ser-1300, and Ser-1302. Polar residues predominate over residues 1315–1327; that stretch reads NASTTSSVASGTE. In terms of domain architecture, CKK spans 1330-1464; it reads GPKLYKEPSA…QTKRPVTPKK (135 aa).

It belongs to the CAMSAP1 family. As to quaternary structure, interacts with CAMSAP3. Interacts with KATNA1 and KATNB1; leading to regulate the length of CAMSAP2-decorated microtubule stretches. Interacts with a complex formed by AKAP9 and PDE4DIP; this interaction, which is PDE4DIP isoform-specific, recruits CAMSAP2 to the Golgi. Interacts with MAPRE1/EB1. As to expression, present in the soma, axon, and dendritic shaft of hippocampal neurons (at protein level).

It is found in the cytoplasm. The protein resides in the cytoskeleton. The protein localises to the golgi apparatus. It localises to the cilium basal body. In terms of biological role, key microtubule-organizing protein that specifically binds the minus-end of non-centrosomal microtubules and regulates their dynamics and organization. Specifically recognizes growing microtubule minus-ends and autonomously decorates and stabilizes microtubule lattice formed by microtubule minus-end polymerization. Acts on free microtubule minus-ends that are not capped by microtubule-nucleating proteins or other factors and protects microtubule minus-ends from depolymerization. In addition, it also reduces the velocity of microtubule polymerization. Through the microtubule cytoskeleton, also regulates the organization of cellular organelles including the Golgi and the early endosomes. Essential for the tethering, but not for nucleation of non-centrosomal microtubules at the Golgi: together with Golgi-associated proteins AKAP9 and PDE4DIP, required to tether non-centrosomal minus-end microtubules to the Golgi, an important step for polarized cell movement. Also acts as a regulator of neuronal polarity and development: localizes to non-centrosomal microtubule minus-ends in neurons and stabilizes non-centrosomal microtubules, which is required for neuronal polarity, axon specification and dendritic branch formation. Through the microtubule cytoskeleton, regulates the autophagosome transport. The chain is Calmodulin-regulated spectrin-associated protein 2 from Rattus norvegicus (Rat).